The chain runs to 214 residues: Thymidylate kinase (214 aa).

Position 10 to 17 (glycine 10 to threonine 17) interacts with ATP.

Belongs to the thymidylate kinase family.

The catalysed reaction is dTMP + ATP = dTDP + ADP. Phosphorylation of dTMP to form dTDP in both de novo and salvage pathways of dTTP synthesis. The chain is Thymidylate kinase from Levilactobacillus brevis (strain ATCC 367 / BCRC 12310 / CIP 105137 / JCM 1170 / LMG 11437 / NCIMB 947 / NCTC 947) (Lactobacillus brevis).